The sequence spans 254 residues: 3-deoxy-manno-octulosonate cytidylyltransferase (254 aa).

The protein belongs to the KdsB family.

The protein localises to the cytoplasm. It catalyses the reaction 3-deoxy-alpha-D-manno-oct-2-ulosonate + CTP = CMP-3-deoxy-beta-D-manno-octulosonate + diphosphate. It participates in nucleotide-sugar biosynthesis; CMP-3-deoxy-D-manno-octulosonate biosynthesis; CMP-3-deoxy-D-manno-octulosonate from 3-deoxy-D-manno-octulosonate and CTP: step 1/1. Its pathway is bacterial outer membrane biogenesis; lipopolysaccharide biosynthesis. Its function is as follows. Activates KDO (a required 8-carbon sugar) for incorporation into bacterial lipopolysaccharide in Gram-negative bacteria. The sequence is that of 3-deoxy-manno-octulosonate cytidylyltransferase from Pseudomonas syringae pv. syringae (strain B728a).